A 472-amino-acid polypeptide reads, in one-letter code: Sodium-coupled neutral amino acid transporter 5 (472 aa).

Methionine 1 carries the N-acetylmethionine modification. Over 1-48 (MELQDPKMNGALPSDAVGYRQEREGFLPSRGPAPGSKPVQFMDFEGKT) the chain is Cytoplasmic. The helical transmembrane segment at 49–71 (SFGMSVFNLSNAIMGSGILGLAY) threads the bilayer. The Extracellular segment spans residues 72–87 (AMAHTGVIFFLALLLC). Residues 88-108 (IALLSSYSIHLLLTCAGIAGI) form a helical membrane-spanning segment. Residues 109–125 (RAYEQLGQRAFGPAGKV) are Cytoplasmic-facing. The helical transmembrane segment at 126–146 (VVATVICLHNVGAMSSYLFII) threads the bilayer. The Extracellular segment spans residues 147–166 (KSELPLVIGTFLYMDPEGDW). Residues 167–187 (FLKGNLLIIIVSVLIILPLAL) traverse the membrane as a helical segment. Residues 188-192 (MKHLG) lie on the Cytoplasmic side of the membrane. The helical transmembrane segment at 193–213 (YLGYTSGLSLTCMLFFLVSVI) threads the bilayer. The Extracellular portion of the chain corresponds to 214-257 (YKKFQLGCAIGHNETAMESEALVGLPSQGLNSSCEAQMFTVDSQ). Cysteine 221 and cysteine 247 are disulfide-bonded. A glycan (N-linked (GlcNAc...) asparagine) is linked at asparagine 226. A helical membrane pass occupies residues 258-278 (MSYTVPIMAFAFVCHPEVLPI). Over 279-295 (YTELCRPSKRRMQAVAN) the chain is Cytoplasmic. A helical transmembrane segment spans residues 296-316 (VSIGAMFCMYGLTATFGYLTF). Over 317–334 (YSSVKAEMLHMYSQKDPL) the chain is Extracellular. Residues 335 to 355 (ILCVRLAVLLAVTLTVPVVLF) form a helical membrane-spanning segment. Residues 356–376 (PIRRALQQLLFPGKAFSWPRH) lie on the Cytoplasmic side of the membrane. Residues 377–397 (VAIALILLVLVNVLVICVPTI) form a helical membrane-spanning segment. Residues 398 to 399 (RD) lie on the Extracellular side of the membrane. The helical transmembrane segment at 400-420 (IFGVIGSTSAPSLIFILPSIF) threads the bilayer. The Cytoplasmic segment spans residues 421-439 (YLRIVPSEVEPFLSWPKIQ). Residues 440 to 460 (ALCFGVLGVLFMAVSLGFMFA) traverse the membrane as a helical segment. At 461-472 (NWATGQSRMSGH) the chain is on the extracellular side.

This sequence belongs to the amino acid/polyamine transporter 2 family. In terms of tissue distribution, predominantly expressed in stomach, brain, liver, lung and intestinal tract.

The protein resides in the cell membrane. It carries out the reaction L-serine(out) + Na(+)(out) + H(+)(in) = L-serine(in) + Na(+)(in) + H(+)(out). The catalysed reaction is L-alanine(out) + Na(+)(out) + H(+)(in) = L-alanine(in) + Na(+)(in) + H(+)(out). The enzyme catalyses glycine(out) + Na(+)(out) + H(+)(in) = glycine(in) + Na(+)(in) + H(+)(out). It catalyses the reaction L-glutamine(out) + Na(+)(out) + H(+)(in) = L-glutamine(in) + Na(+)(in) + H(+)(out). It carries out the reaction L-asparagine(out) + Na(+)(out) + H(+)(in) = L-asparagine(in) + Na(+)(in) + H(+)(out). The catalysed reaction is L-histidine(out) + Na(+)(out) + H(+)(in) = L-histidine(in) + Na(+)(in) + H(+)(out). The enzyme catalyses L-cysteine(out) + Na(+)(out) + H(+)(in) = L-cysteine(in) + Na(+)(in) + H(+)(out). Not inhibited by lithium. Partial allosteric regulation on ions sodium binding. Functionally, symporter that cotransports neutral amino acids and sodium ions, coupled to an H(+) antiporter activity. Releases L-glutamine and glycine from astroglial cells and may participate in the glutamate/GABA-L-glutamine cycle and the NMDA receptors activation. In addition, contributes significantly to L-glutamine uptake in retina, namely in ganglion and Mueller cells therefore, participates in the retinal glutamate-glutamine cycle. The transport activity is pH sensitive and Li(+) tolerant. Moreover functions in both direction and is associated with large uncoupled fluxes of protons. The transport is electroneutral coupled to the cotransport of 1 Na(+) and the antiport of 1 H(+). May have a particular importance for modulation of net hepatic glutamine flux. This is Sodium-coupled neutral amino acid transporter 5 (SLC38A5) from Homo sapiens (Human).